A 476-amino-acid chain; its full sequence is tRNA-2-methylthio-N(6)-dimethylallyladenosine synthase (476 aa).

The region spanning 5-122 (KKLYIKTWGC…LPEMINQVKG (118 aa)) is the MTTase N-terminal domain. [4Fe-4S] cluster-binding residues include C14, C51, C85, C159, C163, and C166. In terms of domain architecture, Radical SAM core spans 145–377 (RAEGPSAFVS…QQRINQQAMS (233 aa)). The TRAM domain maps to 380-443 (RAMLGSVQRI…ANSLRGKVIR (64 aa)).

The protein belongs to the methylthiotransferase family. MiaB subfamily. Monomer. [4Fe-4S] cluster is required as a cofactor.

It is found in the cytoplasm. The catalysed reaction is N(6)-dimethylallyladenosine(37) in tRNA + (sulfur carrier)-SH + AH2 + 2 S-adenosyl-L-methionine = 2-methylsulfanyl-N(6)-dimethylallyladenosine(37) in tRNA + (sulfur carrier)-H + 5'-deoxyadenosine + L-methionine + A + S-adenosyl-L-homocysteine + 2 H(+). Catalyzes the methylthiolation of N6-(dimethylallyl)adenosine (i(6)A), leading to the formation of 2-methylthio-N6-(dimethylallyl)adenosine (ms(2)i(6)A) at position 37 in tRNAs that read codons beginning with uridine. The protein is tRNA-2-methylthio-N(6)-dimethylallyladenosine synthase of Photorhabdus laumondii subsp. laumondii (strain DSM 15139 / CIP 105565 / TT01) (Photorhabdus luminescens subsp. laumondii).